Consider the following 1425-residue polypeptide: Neuropathy target esterase sws (1425 aa).

The Lumenal portion of the chain corresponds to 1–34; that stretch reads MDVLEMLRASASGSYNTIFSDAWCQYVSKQITAT. A helical transmembrane segment spans residues 35 to 55; the sequence is VYMYFALVMMSLLFIAWFLYF. Residues 56–1425 lie on the Cytoplasmic side of the membrane; sequence KRMARLRLRD…RSSPNNETKN (1370 aa). 174–301 serves as a coordination point for a nucleoside 3',5'-cyclic phosphate; that stretch reads IFGHFEKPVF…IRVIQVIMIR (128 aa). Polar residues-rich tracts occupy residues 332-348 and 357-366; these read TMSG…SRQA and SQMNLMQSAV. Residues 332 to 410 form a disordered region; sequence TMSGPINSQT…NPDGSFHGTT (79 aa). Residues 367-381 are compositionally biased toward low complexity; that stretch reads SGTGSSGVSVTVTRP. Residues Ser-444 and Ser-453 each carry the phosphoserine modification. Residues 482–609 and 598–727 contribute to the a nucleoside 3',5'-cyclic phosphate site; these read ELGL…VVRR and IVLD…HRFL. In terms of domain architecture, PNPLA spans 952–1118; sequence LVLGGGGARG…VNNLPADVMH (167 aa). The GXGXXG signature appears at 956 to 961; that stretch reads GGGARG. The GXSXG motif lies at 983–987; that stretch reads GVSIG. Ser-985 (nucleophile) is an active-site residue. Catalysis depends on Asp-1105, which acts as the Proton acceptor. Positions 1105-1107 match the DGA/G motif; it reads DGG. Residue Ser-1160 is modified to Phosphoserine. Residues 1330 to 1425 are disordered; that stretch reads LERKTDKSTQ…RSSPNNETKN (96 aa). Residues 1337 to 1347 show a composition bias toward low complexity; the sequence is STQSSPPSNSR. Residues 1348-1358 show a composition bias toward basic and acidic residues; that stretch reads SDMRGKEEARH. Residues 1380–1403 are compositionally biased toward low complexity; that stretch reads TKTQTGQEQELQQEQQDQGATAEQ. Residues 1404 to 1416 are compositionally biased toward basic and acidic residues; it reads LVDKDKEENKENR.

It belongs to the NTE family. Interacts with Pka-C3; interaction inhibits the catalytic function of Pka-C3 and the esterase activity of sws. Isoform A and isoform B are expressed in the entire brain cortex; cortical cell bodies of adult brain. Sws and Pka-C3 are colocalized in all neurons.

It is found in the endoplasmic reticulum membrane. It catalyses the reaction a 1-acyl-sn-glycero-3-phosphocholine + H2O = sn-glycerol 3-phosphocholine + a fatty acid + H(+). In terms of biological role, phospholipase B that deacylates intracellular phosphatidylcholine (PtdCho), generating glycerophosphocholine (GroPtdCho). This deacylation occurs at both sn-2 and sn-1 positions of PtdCho. Its specific chemical modification by certain organophosphorus (OP) compounds leads to distal axonopathy. Plays a role in the signaling mechanism between neurons and glia that regulates glia wrapping during development of the adult brain. Essential for membrane lipid homeostasis and cell survival in both neurons and glia of the adult brain. This Drosophila melanogaster (Fruit fly) protein is Neuropathy target esterase sws (sws).